The following is a 69-amino-acid chain: Alternative ribosome-rescue factor A (69 aa).

It belongs to the alternative ribosome-rescue factor A family. In terms of assembly, interacts with the 70S ribosome and release factor 2.

In terms of biological role, rescues ribosomes stalled at the 3' end of non-stop mRNAs. Recruits release factor 2 (RF2) to the stalled ribosome, helping position it correctly in the ribosomal A site so its GGQ motif can hydrolyze the peptidyl-tRNA bond. This Haemophilus influenzae (strain ATCC 51907 / DSM 11121 / KW20 / Rd) protein is Alternative ribosome-rescue factor A (arfA).